A 226-amino-acid polypeptide reads, in one-letter code: N-(5'-phosphoribosyl)anthranilate isomerase (226 aa).

Belongs to the TrpF family.

The enzyme catalyses N-(5-phospho-beta-D-ribosyl)anthranilate = 1-(2-carboxyphenylamino)-1-deoxy-D-ribulose 5-phosphate. It functions in the pathway amino-acid biosynthesis; L-tryptophan biosynthesis; L-tryptophan from chorismate: step 3/5. The protein is N-(5'-phosphoribosyl)anthranilate isomerase (trpF) of Methanothermobacter marburgensis (strain ATCC BAA-927 / DSM 2133 / JCM 14651 / NBRC 100331 / OCM 82 / Marburg) (Methanobacterium thermoautotrophicum).